Consider the following 250-residue polypeptide: MRRPLLAGNWKMHYGVSEGVALVEALSADLTDLTDRDVLVCPPFTLLGSLAPLLDGTAVALGAQNMHYEAKGAYTGEIAPQMLKELGCSYVILGHSERRQYFGETDALINRKAHAALANGLKPIVCVGEVKAERDSGQAESVVVGQLRGSLAGLSAEQLRGVVIAYEPVWAIGTGDTATPADAQAMHARIRAELAALSDQATADAVIIQYGGSVKPDNVDELMAQPDIDGALVGGASLKAADFIRIVRFK.

9 to 11 (NWK) is a substrate binding site. His-95 serves as the catalytic Electrophile. The Proton acceptor role is filled by Glu-167. Substrate is bound by residues Gly-173, Ser-213, and 234-235 (GG).

The protein belongs to the triosephosphate isomerase family. As to quaternary structure, homodimer.

The protein resides in the cytoplasm. The enzyme catalyses D-glyceraldehyde 3-phosphate = dihydroxyacetone phosphate. The protein operates within carbohydrate biosynthesis; gluconeogenesis. It functions in the pathway carbohydrate degradation; glycolysis; D-glyceraldehyde 3-phosphate from glycerone phosphate: step 1/1. In terms of biological role, involved in the gluconeogenesis. Catalyzes stereospecifically the conversion of dihydroxyacetone phosphate (DHAP) to D-glyceraldehyde-3-phosphate (G3P). This chain is Triosephosphate isomerase, found in Herpetosiphon aurantiacus (strain ATCC 23779 / DSM 785 / 114-95).